Here is a 369-residue protein sequence, read N- to C-terminus: tRNA pseudouridine synthase D (369 aa).

Asp80 acts as the Nucleophile in catalysis. In terms of domain architecture, TRUD spans 156-318 (GIPNWFGEQR…LKQERRALRL (163 aa)).

Belongs to the pseudouridine synthase TruD family.

The enzyme catalyses uridine(13) in tRNA = pseudouridine(13) in tRNA. Its function is as follows. Responsible for synthesis of pseudouridine from uracil-13 in transfer RNAs. The protein is tRNA pseudouridine synthase D of Xanthomonas euvesicatoria pv. vesicatoria (strain 85-10) (Xanthomonas campestris pv. vesicatoria).